Reading from the N-terminus, the 96-residue chain is MNIRPLHDRVIVKRVEAERTTASGIVIPDSAGEKPDQGEVLAVGPGKRDDNGKQIALDVKVGDRVLFGKYAGQAVKVDGQEVLVMREEDIMGVLVA.

The protein belongs to the GroES chaperonin family. As to quaternary structure, heptamer of 7 subunits arranged in a ring. Interacts with the chaperonin GroEL.

Its subcellular location is the cytoplasm. Its function is as follows. Together with the chaperonin GroEL, plays an essential role in assisting protein folding. The GroEL-GroES system forms a nano-cage that allows encapsulation of the non-native substrate proteins and provides a physical environment optimized to promote and accelerate protein folding. GroES binds to the apical surface of the GroEL ring, thereby capping the opening of the GroEL channel. In Dechloromonas aromatica (strain RCB), this protein is Co-chaperonin GroES.